Reading from the N-terminus, the 182-residue chain is NADH-quinone oxidoreductase subunit B 2 (182 aa).

[4Fe-4S] cluster is bound by residues C57, C58, C123, and C153.

Belongs to the complex I 20 kDa subunit family. In terms of assembly, NDH-1 is composed of 14 different subunits. Subunits NuoB, C, D, E, F, and G constitute the peripheral sector of the complex. Requires [4Fe-4S] cluster as cofactor.

Its subcellular location is the cell membrane. It carries out the reaction a quinone + NADH + 5 H(+)(in) = a quinol + NAD(+) + 4 H(+)(out). In terms of biological role, NDH-1 shuttles electrons from NADH, via FMN and iron-sulfur (Fe-S) centers, to quinones in the respiratory chain. The immediate electron acceptor for the enzyme in this species is believed to be a menaquinone. Couples the redox reaction to proton translocation (for every two electrons transferred, four hydrogen ions are translocated across the cytoplasmic membrane), and thus conserves the redox energy in a proton gradient. This is NADH-quinone oxidoreductase subunit B 2 from Symbiobacterium thermophilum (strain DSM 24528 / JCM 14929 / IAM 14863 / T).